The chain runs to 347 residues: MLISQRPTLSEEVLTDNRSQFVIEPLEPGFGYTLGNSLRRTLLSSIPGAAVTSIRIDGVLHEFTTVPGVKEDVTAIILNLKSLVVSSEEDEPVTMYLRKQGPGEVTAGDIVPPAGVTVHNPELHIATLNDKGKLEVELVVERGRGYVPAVQNRASGAEIGRIPVDSIYSPVLKVTYKVDATRVEQRTDFDKLILDVETKSSITPRDALASAGKTLVELFGLARELNVEAEGIEIGPSPAEADHIASFALPIDDLDLTVRSYNCLKREGVHTVGELVSRTESDLLDIRNFGQKSIDEVKVKLHQLGLSLKDSPPSFDPSQVAGYDVATGTWSTEAAYDDQDYAETEQL.

The interval 1-226 is alpha N-terminal domain (alpha-NTD); sequence MLISQRPTLS…ELFGLARELN (226 aa). The interval 241-347 is alpha C-terminal domain (alpha-CTD); sequence ADHIASFALP…DQDYAETEQL (107 aa).

Belongs to the RNA polymerase alpha chain family. In terms of assembly, homodimer. The RNAP catalytic core consists of 2 alpha, 1 beta, 1 beta' and 1 omega subunit. When a sigma factor is associated with the core the holoenzyme is formed, which can initiate transcription.

The enzyme catalyses RNA(n) + a ribonucleoside 5'-triphosphate = RNA(n+1) + diphosphate. Its function is as follows. DNA-dependent RNA polymerase catalyzes the transcription of DNA into RNA using the four ribonucleoside triphosphates as substrates. The chain is DNA-directed RNA polymerase subunit alpha from Mycobacterium avium (strain 104).